Reading from the N-terminus, the 265-residue chain is Apolipoprotein A-I (265 aa).

The first 18 residues, 1–18 (MKAVLLTLAVLFLTGSQA), serve as a signal peptide directing secretion. A run of 2 repeats spans residues 67–88 (LKLL…EQLG) and 89–110 (PVTQ…QEMN). Residues 67-265 (LKLLDNWDSL…DEASKKLNAQ (199 aa)) form a 10 X approximate tandem repeats region. A Methionine sulfoxide modification is found at Met109. One copy of the 3; half-length repeat lies at 111-121 (KDLEEVKQKVQ). Tandem repeats lie at residues 122–142 (PYLD…RQKV), 144–165 (PLGE…DKLT), 166–187 (PLAE…QQLA), 188–209 (PYSD…AGGG), and 210–230 (SLAE…EKAK). A 9; half-length repeat occupies 231–241 (PALEDLRQGLV). Copy 10 of the repeat occupies 242-265 (PVLESLKVSILAAIDEASKKLNAQ).

The protein belongs to the apolipoprotein A1/A4/E family. In terms of assembly, homodimer. Interacts with APOA1BP and CLU. Component of a sperm activating protein complex (SPAP), consisting of APOA1, an immunoglobulin heavy chain, an immunoglobulin light chain and albumin. Interacts with NDRG1. Interacts with SCGB3A2. Interacts with NAXE and YJEFN3. Glycosylated. Post-translationally, palmitoylated. In terms of processing, phosphorylation sites are present in the extracellular medium. Major protein of plasma HDL, also found in chylomicrons.

Its subcellular location is the secreted. Its function is as follows. Participates in the reverse transport of cholesterol from tissues to the liver for excretion by promoting cholesterol efflux from tissues and by acting as a cofactor for the lecithin cholesterol acyltransferase (LCAT). As part of the SPAP complex, activates spermatozoa motility. This chain is Apolipoprotein A-I (APOA1), found in Tursiops truncatus (Atlantic bottle-nosed dolphin).